The sequence spans 345 residues: MLLLGLLLLTSALAGQRTGTRAESNLSSKLQLSSDKEQNGVQDPRHERVVTISGNGSIHSPKFPHTYPRNTVLVWRLVAVDENVRIQLTFDERFGLEDPEDDLCKYDFVEVEEPSDGSVLGRWCGSGTVPGKQTSKGNHIRIRFVSDEYFPSEPGFCIHYSIIMPQVTETTSPSVLPPSALSLDLLNNAVTAFSTVEELIRFLEPDRWQIDLDSLYKPTWPLLGKAFLYGKKSKAVNLNLLKEEVKLYSCTPRNFSVSIREELKRTDTIFWPGCLLVKRCGGNCACCLHNCNECQCVPRKVTKKYHEVLQLRPKIGVKGLHKSLTDVALEHHEECDCVCRGNTEG.

Residues 1 to 22 form the signal peptide; sequence MLLLGLLLLTSALAGQRTGTRA. The span at 24–33 shows a compositional bias: polar residues; that stretch reads SNLSSKLQLS. A disordered region spans residues 24 to 45; it reads SNLSSKLQLSSDKEQNGVQDPR. A glycan (N-linked (GlcNAc...) asparagine) is linked at N25. Positions 34-45 are enriched in basic and acidic residues; the sequence is SDKEQNGVQDPR. In terms of domain architecture, CUB spans 46–163; it reads HERVVTISGN…PGFCIHYSII (118 aa). N55 carries an N-linked (GlcNAc...) asparagine glycan. 4 disulfides stabilise this stretch: C104/C124, C250/C294, C280/C335, and C287/C337.

It belongs to the PDGF/VEGF growth factor family. In terms of assembly, homodimer; disulfide-linked. Interacts with PDGFRA homodimers, and with heterodimers formed by PDGFRA and PDGFRB. Interacts (via CUB domain) with PLAT (via kringle domain). Post-translationally, proteolytic removal of the N-terminal CUB domain releasing the core domain is necessary for unmasking the receptor-binding epitopes of the core domain. Cleavage after basic residues in the hinge region (region connecting the CUB and growth factor domains) gives rise to the receptor-binding form. Cleaved by PLAT and PLG. Sumoylated with SUMO1. In terms of processing, N-glycosylated. In terms of tissue distribution, highly expressed in the kidney and adrenal gland. In the kidney, it is expressed in arteriolar smooth muscle cells and in epithelial cells of individual segments (at protein level).

The protein localises to the cytoplasm. The protein resides in the cytosol. It localises to the secreted. It is found in the nucleus. Its subcellular location is the cytoplasmic granule. The protein localises to the cell membrane. Functionally, growth factor that plays an essential role in the regulation of embryonic development, cell proliferation, cell migration, survival and chemotaxis. Potent mitogen and chemoattractant for cells of mesenchymal origin. Required for normal skeleton formation during embryonic development, especially for normal development of the craniofacial skeleton and for normal development of the palate. Required for normal skin morphogenesis during embryonic development. Plays an important role in wound healing, where it appears to be involved in three stages: inflammation, proliferation and remodeling. Plays an important role in angiogenesis and blood vessel development. Involved in fibrotic processes, in which transformation of interstitial fibroblasts into myofibroblasts plus collagen deposition occurs. The CUB domain has mitogenic activity in coronary artery smooth muscle cells, suggesting a role beyond the maintenance of the latency of the PDGF domain. In the nucleus, PDGFC seems to have additional function. The sequence is that of Platelet-derived growth factor C (Pdgfc) from Rattus norvegicus (Rat).